Consider the following 454-residue polypeptide: Pyrrolysine--tRNA ligase (454 aa).

Positions 102–138 are disordered; it reads TRTKKAMPKSVARAPKPLENTEAAQAQPSGSKFSPAI. Over residues 123–133 the composition is skewed to polar residues; the sequence is EAAQAQPSGSK.

The protein belongs to the class-II aminoacyl-tRNA synthetase family.

It is found in the cytoplasm. It carries out the reaction tRNA(Pyl) + L-pyrrolysine + ATP = L-pyrrolysyl-tRNA(Pyl) + AMP + diphosphate. Functionally, catalyzes the attachment of pyrrolysine to tRNA(Pyl). Pyrrolysine is a lysine derivative encoded by the termination codon UAG. The protein is Pyrrolysine--tRNA ligase of Methanosarcina mazei (strain ATCC BAA-159 / DSM 3647 / Goe1 / Go1 / JCM 11833 / OCM 88) (Methanosarcina frisia).